The sequence spans 240 residues: 1-(5-phosphoribosyl)-5-[(5-phosphoribosylamino)methylideneamino] imidazole-4-carboxamide isomerase 2 (240 aa).

Aspartate 8 acts as the Proton acceptor in catalysis. Catalysis depends on aspartate 129, which acts as the Proton donor.

The protein belongs to the HisA/HisF family.

It is found in the cytoplasm. It carries out the reaction 1-(5-phospho-beta-D-ribosyl)-5-[(5-phospho-beta-D-ribosylamino)methylideneamino]imidazole-4-carboxamide = 5-[(5-phospho-1-deoxy-D-ribulos-1-ylimino)methylamino]-1-(5-phospho-beta-D-ribosyl)imidazole-4-carboxamide. It participates in amino-acid biosynthesis; L-histidine biosynthesis; L-histidine from 5-phospho-alpha-D-ribose 1-diphosphate: step 4/9. The sequence is that of 1-(5-phosphoribosyl)-5-[(5-phosphoribosylamino)methylideneamino] imidazole-4-carboxamide isomerase 2 from Ruegeria sp. (strain TM1040) (Silicibacter sp.).